The primary structure comprises 365 residues: Nudix hydrolase 24, chloroplastic (365 aa).

A chloroplast-targeting transit peptide spans 1–30; it reads MASAFCSLCPTPTSLFSSHALIPTLQWRSS. One can recognise a Nudix hydrolase domain in the interval 196-337; that stretch reads GYAIHVNGYV…KDSCSLVIID (142 aa). The short motif at 235–256 is the Nudix box element; the sequence is GGLPHGISVCENLVKECEEEAG. Mg(2+) contacts are provided by Glu250 and Glu254.

Belongs to the Nudix hydrolase family. It depends on Mg(2+) as a cofactor. Mn(2+) serves as cofactor. Expressed in leaves.

It is found in the plastid. The protein localises to the chloroplast. In terms of biological role, probably mediates the hydrolysis of some nucleoside diphosphate derivatives. The polypeptide is Nudix hydrolase 24, chloroplastic (NUDT24) (Arabidopsis thaliana (Mouse-ear cress)).